Consider the following 128-residue polypeptide: Small ribosomal subunit protein bS6 (128 aa).

The protein belongs to the bacterial ribosomal protein bS6 family.

Binds together with bS18 to 16S ribosomal RNA. This chain is Small ribosomal subunit protein bS6 (rpsF), found in Thermotoga maritima (strain ATCC 43589 / DSM 3109 / JCM 10099 / NBRC 100826 / MSB8).